A 323-amino-acid polypeptide reads, in one-letter code: Serpentine receptor class gamma-5 (323 aa).

The next 7 membrane-spanning stretches (helical) occupy residues 31 to 51 (QLFY…IMLF), 63 to 83 (FIIF…DLFI), 98 to 117 (YPLF…IYNY), 151 to 171 (IPVT…NVII), 193 to 213 (WASL…ITVF), 245 to 265 (AAFF…ITAA), and 272 to 292 (FLQG…MVLI).

The protein belongs to the nematode receptor-like protein srg family.

The protein resides in the membrane. The polypeptide is Serpentine receptor class gamma-5 (srg-5) (Caenorhabditis elegans).